We begin with the raw amino-acid sequence, 130 residues long: Hydrogenase maturation factor HypA (130 aa).

H2 is a binding site for Ni(2+). Residues C74, C77, C90, and C93 each coordinate Zn(2+).

Belongs to the HypA/HybF family.

Functionally, involved in the maturation of [NiFe] hydrogenases. Required for nickel insertion into the metal center of the hydrogenase. In Desulfatibacillum aliphaticivorans, this protein is Hydrogenase maturation factor HypA.